A 362-amino-acid polypeptide reads, in one-letter code: Very-long-chain (3R)-3-hydroxyacyl-CoA dehydratase 3 (362 aa).

M1 bears the N-acetylmethionine mark. The Cytoplasmic portion of the chain corresponds to 1–149 (METQVLTPHV…ETLTNLKKGY (149 aa)). Residues 5–94 (VLTPHVYWAQ…KGSHWWERLT (90 aa)) enclose the CS domain. Position 7 is a phosphothreonine (T7). A coiled-coil region spans residues 111–138 (LDESDAEMELRAKEEERLNKLRLEREGS). At S114 the chain carries Phosphoserine. The helical transmembrane segment at 150 to 170 (LFMYNLVQLLGFSWIFVNLTV) threads the bilayer. Over 171 to 189 (RFFILGKESFYDTFHNVAD) the chain is Lumenal. Residues 190–210 (MMYFCQMLALVETLNAAIGVT) form a helical membrane-spanning segment. The Cytoplasmic segment spans residues 211 to 212 (ST). The helical transmembrane segment at 213-233 (PVLPALIQFLGRNFILFLVFG) threads the bilayer. Over 234–242 (TMEEMQNKA) the chain is Lumenal. The helical transmembrane segment at 243 to 263 (VVFFVFYSWSAIEIFRYPFYM) threads the bilayer. Over 264 to 280 (LSCIDMDWKVLTWLRYT) the chain is Cytoplasmic. A helical transmembrane segment spans residues 281–301 (MWIPLYPLGCLSEAVAVIQSI). Catalysis depends on residues Y286 and E293. Residues 302-322 (PVFNESGRFSFTLPYPVKMKV) lie on the Lumenal side of the membrane. A helical transmembrane segment spans residues 323–343 (RFSFFLQVYLVMLFLGLYINF). The Cytoplasmic portion of the chain corresponds to 344-362 (RHLYKQRRRRYGQKKKKLH).

This sequence belongs to the very long-chain fatty acids dehydratase HACD family. In terms of assembly, may interact with enzymes of the ELO family (including ELOVL1); with those enzymes that mediate condensation, the first of the four steps of the reaction cycle responsible for fatty acids elongation, may be part of a larger fatty acids elongase complex. Interacts with RAC1. Associates with internalized insulin receptor/INSR complexes on Golgi/endosomal membranes; HACD3/PTPLAD1 together with ATIC and PRKAA2/AMPK2 is proposed to be part of a signaling network regulating INSR autophosphorylation and endocytosis.

The protein resides in the endoplasmic reticulum membrane. The catalysed reaction is a very-long-chain (3R)-3-hydroxyacyl-CoA = a very-long-chain (2E)-enoyl-CoA + H2O. The enzyme catalyses (3R)-hydroxyhexadecanoyl-CoA = (2E)-hexadecenoyl-CoA + H2O. The protein operates within lipid metabolism; fatty acid biosynthesis. In terms of biological role, catalyzes the third of the four reactions of the long-chain fatty acids elongation cycle. This endoplasmic reticulum-bound enzymatic process, allows the addition of two carbons to the chain of long- and very long-chain fatty acids/VLCFAs per cycle. This enzyme catalyzes the dehydration of the 3-hydroxyacyl-CoA intermediate into trans-2,3-enoyl-CoA, within each cycle of fatty acid elongation. Thereby, it participates in the production of VLCFAs of different chain lengths that are involved in multiple biological processes as precursors of membrane lipids and lipid mediators. Involved in Rac1-signaling pathways leading to the modulation of gene expression. Promotes insulin receptor/INSR autophosphorylation and is involved in INSR internalization. The chain is Very-long-chain (3R)-3-hydroxyacyl-CoA dehydratase 3 from Mus musculus (Mouse).